An 88-amino-acid polypeptide reads, in one-letter code: N-alpha-acetyltransferase 38, NatC auxiliary subunit (88 aa).

Positions 1–72 constitute a Sm domain; the sequence is MDILKLSDFI…VKTIMIDKPV (72 aa).

In terms of assembly, component of the N-terminal acetyltransferase C (NatC) complex, composed of the catalytic subunit Naa30/MAK3, a large auxiliary subunit Naa35/MAK10 and a small auxiliary subunit Naa38/MAK31.

Its function is as follows. Component of the NatC N-terminal acetyltransferase, which associates with the ribosome to acetylate nascent protein chains in a cotranslational manner. NatC acetylates protein N-termini starting with methionine, followed by a hydrophobic or amphipathic amino acid, with amino acids at positions 3 and 4 also contributing to NatC recognition. The first 4 amino acids of cognate substrates are recognized at the Naa30/MAK3-Naa35/MAK10 interface. NatC-dependent acetylation targets various substrate proteins to specific subcellular sites, including isoform 2 of tRNA-specific methyltransferase Trm1 to the inner nuclear membrane. Catalyzes the acetylation of the N-terminal Met of ARF-like GTPase ARL3, which is required for its Golgi localization via interaction with the Golgi-localized integral membrane protein SYS1, which may serve as a receptor for acetylated ARL3. Catalyzes the acetylation of the N-terminal Met of L-A virus Gag protein. MAK31 is necessary for the structural stability of L-A double-stranded RNA-containing particles. Necessary for growth at 37 degrees Celsius as well as for maintenance of the killer plasmid. The chain is N-alpha-acetyltransferase 38, NatC auxiliary subunit (MAK31) from Saccharomyces cerevisiae (strain ATCC 204508 / S288c) (Baker's yeast).